We begin with the raw amino-acid sequence, 87 residues long: Small ribosomal subunit protein uS17 (87 aa).

Belongs to the universal ribosomal protein uS17 family. In terms of assembly, part of the 30S ribosomal subunit.

Its function is as follows. One of the primary rRNA binding proteins, it binds specifically to the 5'-end of 16S ribosomal RNA. This Geobacillus sp. (strain WCH70) protein is Small ribosomal subunit protein uS17.